Here is a 571-residue protein sequence, read N- to C-terminus: CDT1-like protein a, chloroplastic (571 aa).

Residues 1 to 79 constitute a chloroplast transit peptide; it reads MSTPGSSRSI…GSRRRSEDPV (79 aa). 2 disordered regions span residues 1–110 and 288–315; these read MSTP…EKEK and TTSS…TPAK. The span at 22 to 38 shows a compositional bias: polar residues; sequence SPSSKSQTGNPNPSSVA. Positions 81-96 are enriched in low complexity; the sequence is SSAKSRLFFDSSSSSP. Polar residues predominate over residues 288–302; sequence TTSSLAKPTSSQINI. Positions 303-315 are enriched in low complexity; the sequence is APTPTKPTSTPAK.

The protein belongs to the Cdt1 family. In terms of assembly, binds to ARC6. Phosphorylated by cyclin D- and cyclin A-containing CDKA-1, and thus targeted to proteasome-mediated proteolysis. In terms of tissue distribution, expressed in proliferating (e.g. shoot and root apical meristems, organ primordia) and endoreplicating cells (e.g. guard cells and stomatal lineage, developing trichomes).

It is found in the plastid. The protein localises to the chloroplast. Its function is as follows. Member of the pre-replication complex. Component of the plastid division machinery. Promotes polyloidization and regulates endoreduplication. Involved in the coordination of cell and plastid division. The polypeptide is CDT1-like protein a, chloroplastic (CDT1A) (Arabidopsis thaliana (Mouse-ear cress)).